Here is a 295-residue protein sequence, read N- to C-terminus: Ethanolamine ammonia-lyase small subunit (295 aa).

Residues Val-207, Glu-228, and Cys-258 each coordinate adenosylcob(III)alamin.

Belongs to the EutC family. In terms of assembly, the basic unit is a heterodimer which dimerizes to form tetramers. The heterotetramers trimerize; 6 large subunits form a core ring with 6 small subunits projecting outwards. Adenosylcob(III)alamin serves as cofactor.

Its subcellular location is the bacterial microcompartment. It carries out the reaction ethanolamine = acetaldehyde + NH4(+). It participates in amine and polyamine degradation; ethanolamine degradation. In terms of biological role, catalyzes the deamination of various vicinal amino-alcohols to oxo compounds. Allows this organism to utilize ethanolamine as the sole source of nitrogen and carbon in the presence of external vitamin B12. This Escherichia coli O157:H7 protein is Ethanolamine ammonia-lyase small subunit.